A 98-amino-acid polypeptide reads, in one-letter code: Bombyxin A-3 homolog (98 aa).

A signal peptide spans 1-18 (MRTQVLFLVLEVAAMASG). Cystine bridges form between cysteine 26–cysteine 85, cysteine 38–cysteine 98, and cysteine 84–cysteine 89. Positions 47–75 (TPYTSSESEGYGWRWLAPQRARQLAGARG) are cleaved as a propeptide — c peptide like.

This sequence belongs to the insulin family. In terms of assembly, heterodimer of a B chain and an A chain linked by two disulfide bonds.

It localises to the secreted. Functionally, brain peptide responsible for activation of prothoracic glands to produce ecdysone in insects. The chain is Bombyxin A-3 homolog (SBXA3) from Samia cynthia (Ailanthus silkmoth).